The following is a 576-amino-acid chain: Arginine--tRNA ligase (576 aa).

Residues 122–132 (PNVAKQMHVGH) carry the 'HIGH' region motif.

This sequence belongs to the class-I aminoacyl-tRNA synthetase family. Monomer.

It localises to the cytoplasm. The catalysed reaction is tRNA(Arg) + L-arginine + ATP = L-arginyl-tRNA(Arg) + AMP + diphosphate. This chain is Arginine--tRNA ligase, found in Yersinia pestis bv. Antiqua (strain Antiqua).